The sequence spans 333 residues: Anthranilate phosphoribosyltransferase (333 aa).

5-phospho-alpha-D-ribose 1-diphosphate-binding positions include G81, 84–85 (GD), T89, 91–94 (NIST), 109–117 (KHGNRSVSS), and A121. An anthranilate-binding site is contributed by G81. S93 contacts Mg(2+). Anthranilate is bound at residue N112. R167 serves as a coordination point for anthranilate. Residues D225 and E226 each contribute to the Mg(2+) site.

Belongs to the anthranilate phosphoribosyltransferase family. Homodimer. Requires Mg(2+) as cofactor.

The enzyme catalyses N-(5-phospho-beta-D-ribosyl)anthranilate + diphosphate = 5-phospho-alpha-D-ribose 1-diphosphate + anthranilate. Its pathway is amino-acid biosynthesis; L-tryptophan biosynthesis; L-tryptophan from chorismate: step 2/5. Its function is as follows. Catalyzes the transfer of the phosphoribosyl group of 5-phosphorylribose-1-pyrophosphate (PRPP) to anthranilate to yield N-(5'-phosphoribosyl)-anthranilate (PRA). The chain is Anthranilate phosphoribosyltransferase from Actinobacillus succinogenes (strain ATCC 55618 / DSM 22257 / CCUG 43843 / 130Z).